Reading from the N-terminus, the 339-residue chain is Ketol-acid reductoisomerase (NADP(+)) (339 aa).

The 182-residue stretch at 1–182 (MRVYYDRDAD…GGGRSGVIET (182 aa)) folds into the KARI N-terminal Rossmann domain. Residues 24–27 (YGSQ), Arg-48, Ser-51, Thr-53, and 83–86 (DELQ) contribute to the NADP(+) site. His-108 is an active-site residue. An NADP(+)-binding site is contributed by Gly-134. The KARI C-terminal knotted domain occupies 183-328 (TFKEECETDL…GKLRAMMPWI (146 aa)). 4 residues coordinate Mg(2+): Asp-191, Glu-195, Glu-227, and Glu-231. Residue Ser-252 participates in substrate binding.

It belongs to the ketol-acid reductoisomerase family. The cofactor is Mg(2+).

The enzyme catalyses (2R)-2,3-dihydroxy-3-methylbutanoate + NADP(+) = (2S)-2-acetolactate + NADPH + H(+). The catalysed reaction is (2R,3R)-2,3-dihydroxy-3-methylpentanoate + NADP(+) = (S)-2-ethyl-2-hydroxy-3-oxobutanoate + NADPH + H(+). Its pathway is amino-acid biosynthesis; L-isoleucine biosynthesis; L-isoleucine from 2-oxobutanoate: step 2/4. It participates in amino-acid biosynthesis; L-valine biosynthesis; L-valine from pyruvate: step 2/4. Its function is as follows. Involved in the biosynthesis of branched-chain amino acids (BCAA). Catalyzes an alkyl-migration followed by a ketol-acid reduction of (S)-2-acetolactate (S2AL) to yield (R)-2,3-dihydroxy-isovalerate. In the isomerase reaction, S2AL is rearranged via a Mg-dependent methyl migration to produce 3-hydroxy-3-methyl-2-ketobutyrate (HMKB). In the reductase reaction, this 2-ketoacid undergoes a metal-dependent reduction by NADPH to yield (R)-2,3-dihydroxy-isovalerate. The chain is Ketol-acid reductoisomerase (NADP(+)) from Brucella suis (strain ATCC 23445 / NCTC 10510).